A 406-amino-acid polypeptide reads, in one-letter code: NADH-quinone oxidoreductase subunit D (406 aa).

This sequence belongs to the complex I 49 kDa subunit family. As to quaternary structure, NDH-1 is composed of 14 different subunits. Subunits NuoB, C, D, E, F, and G constitute the peripheral sector of the complex.

Its subcellular location is the cell inner membrane. The enzyme catalyses a quinone + NADH + 5 H(+)(in) = a quinol + NAD(+) + 4 H(+)(out). In terms of biological role, NDH-1 shuttles electrons from NADH, via FMN and iron-sulfur (Fe-S) centers, to quinones in the respiratory chain. The immediate electron acceptor for the enzyme in this species is believed to be ubiquinone. Couples the redox reaction to proton translocation (for every two electrons transferred, four hydrogen ions are translocated across the cytoplasmic membrane), and thus conserves the redox energy in a proton gradient. This is NADH-quinone oxidoreductase subunit D from Leptospira biflexa serovar Patoc (strain Patoc 1 / Ames).